Consider the following 584-residue polypeptide: ETHYLENE INSENSITIVE 3-like 1 protein (584 aa).

Residues Tyr41–Glu74 are a coiled coil. Residues Glu67–Lys80 show a composition bias toward basic and acidic residues. Disordered regions lie at residues Glu67 to Met93 and Glu565 to Phe584.

Belongs to the EIN3 family. Acts as a homodimer to bind the primary ethylene response element.

The protein resides in the nucleus. In terms of biological role, probable transcription factor acting as a positive regulator in the ethylene response pathway. Could bind the primary ethylene response element present in the ETHYLENE-RESPONSE-FACTOR1 promoter. The sequence is that of ETHYLENE INSENSITIVE 3-like 1 protein (EIL1) from Arabidopsis thaliana (Mouse-ear cress).